A 1966-amino-acid chain; its full sequence is Histone-lysine N-methyltransferase SETD1B (1966 aa).

The span at 1-12 (MENSHPPHHHHQ) shows a compositional bias: basic residues. A disordered region spans residues 1 to 26 (MENSHPPHHHHQQPPPQPGPSGERRN). The segment at 68–98 (VEDPRVVGIWTKNKELELSVPKFKIDEFYVG) is interaction with WDR82. In terms of domain architecture, RRM spans 93–181 (DEFYVGPVPP…NIIHVELDTK (89 aa)). 7 disordered regions span residues 235–302 (GCGS…LFSQ), 357–660 (VGGT…PKPM), 675–719 (LAPT…PPPA), 963–1462 (KVKR…SGPL), 1501–1541 (PPLL…RPPA), 1555–1606 (QPQT…KLPF), and 1636–1668 (AKSRGPWRRPPKKRHEDLVPPAGSPELSPPQPL). Composition is skewed to polar residues over residues 243-259 (VTPNSGGTPFSQDTAYS), 265-274 (TPNSYGQGTP), and 282-300 (PFSQDSSYSSRQPTPSYLF). 2 stretches are compositionally biased toward pro residues: residues 432–441 (PAPPPLPPAE) and 449–458 (GTPPGPPPPD). Over residues 493–521 (EKPHDSLDSRIEMLLKEQRTKLLFLREPD) the composition is skewed to basic and acidic residues. Residues 531–543 (SPISSSSSQLSPL) show a composition bias toward low complexity. Residues 592–603 (PRPPPEPGPPDP) are compositionally biased toward pro residues. Acidic residues predominate over residues 637–646 (EDMEISDDEM). A compositionally biased stretch (pro residues) spans 679-719 (LPLPPPPGFPPLPPPPPPPPPQPGFPMPPPLPPPPPPPPPA). 2 positions are modified to phosphoserine: Ser986 and Ser994. Positions 995–1015 (ERERDRDMADTPCELAKRDPK) are enriched in basic and acidic residues. Phosphoserine is present on Ser1031. The segment covering 1041 to 1064 (LSASSSSSASSSSGSSTTSPSSSA) has biased composition (low complexity). 2 stretches are compositionally biased toward acidic residues: residues 1067 to 1087 (KEEEQESTEEEEEAEEEEEEE) and 1104 to 1142 (KDDDDDDSDDRDESENDDEDTALSEASEKDEGDSDEEET). A compositionally biased stretch (low complexity) spans 1148–1174 (SKAEATSSSESSESSEFESSSESSPSS). Residues 1173-1204 (SSSEDEEEVVAREEEEEEEEEEMVAEESMASA) adopt a coiled-coil conformation. Acidic residues-rich tracts occupy residues 1175 to 1197 (SEDEEEVVAREEEEEEEEEEMVA) and 1229 to 1238 (GMEEEVDIET). Ser1265, Ser1283, and Ser1335 each carry phosphoserine. Positions 1312–1340 (EPPMMLPLPLQPPLPPPRPPRPPSPPPEP) are enriched in pro residues. The span at 1383-1425 (PGGEPPLSGGSSGLSLSSPQVPGSPFSYPAPSPSLSSGGLPRT) shows a compositional bias: low complexity. Pro residues predominate over residues 1501–1514 (PPLLPAPLASCPPP). Residues 1515–1524 (MKRKPGRPRR) are compositionally biased toward basic residues. Over residues 1580 to 1600 (PAPPPPLPPQPPPPPPPPPVE) the composition is skewed to pro residues. A phosphoserine mark is found at Ser1659 and Ser1663. A WDR5 interaction motif (WIN) motif is present at residues 1745–1750 (GCARSE). Residues 1767–1800 (SRASTDEPPADTQGMSIPAQPHASTRAGSERRSE) form a disordered region. The short motif at 1798–1803 (RSEQRR) is the RxxxRR motif element. The SET domain maps to 1827-1944 (KKLKFCKSHI…VNEEITYDYK (118 aa)). An S-adenosyl-L-methionine-binding site is contributed by Tyr1943. In terms of domain architecture, Post-SET spans 1950 to 1966 (VKIPCLCGSENCRGTLN).

This sequence belongs to the class V-like SAM-binding methyltransferase superfamily. Component of the SET1B/COMPASS complex composed of the catalytic subunit SETD1B, WDR5, WDR82, RBBP5, ASH2L/ASH2, CXXC1/CFP1, HCFC1, DPY30 homotrimer and BOD1. Forms a core complex with the evolutionary conserved subcomplex WRAD composed of WDR5, RBBP5, ASH2L/ASH2 and DPY30 subunits; WRAD differentially stimulates the methyltransferase activity. Interacts with HCFC1 and ASH2L/ASH2. Interacts (via N-terminal region) with WDR82. Interacts (via the RRM domain) with hyperphosphorylated C-terminal domain (CTD) of RNA polymerase II large subunit (POLR2A) only in the presence of WDR82. Binds specifically to CTD heptad repeats phosphorylated on 'Ser-5' of each heptad. Interacts with RBM15. Interacts (via WIN motif) with WDR5.

The protein resides in the nucleus. It is found in the nucleus speckle. Its subcellular location is the chromosome. It localises to the cytoplasm. The catalysed reaction is L-lysyl(4)-[histone H3] + S-adenosyl-L-methionine = N(6)-methyl-L-lysyl(4)-[histone H3] + S-adenosyl-L-homocysteine + H(+). It catalyses the reaction N(6)-methyl-L-lysyl(4)-[histone H3] + S-adenosyl-L-methionine = N(6),N(6)-dimethyl-L-lysyl(4)-[histone H3] + S-adenosyl-L-homocysteine + H(+). The enzyme catalyses N(6),N(6)-dimethyl-L-lysyl(4)-[histone H3] + S-adenosyl-L-methionine = N(6),N(6),N(6)-trimethyl-L-lysyl(4)-[histone H3] + S-adenosyl-L-homocysteine + H(+). Histone methyltransferase that catalyzes methyl group transfer from S-adenosyl-L-methionine to the epsilon-amino group of 'Lys-4' of histone H3 (H3K4) via a non-processive mechanism. Part of chromatin remodeling machinery, forms H3K4me1, H3K4me2 and H3K4me3 methylation marks at active chromatin sites where transcription and DNA repair take place. Plays an essential role in regulating the transcriptional programming of multipotent hematopoietic progenitor cells and lymphoid lineage specification during hematopoiesis. This Homo sapiens (Human) protein is Histone-lysine N-methyltransferase SETD1B (SETD1B).